Reading from the N-terminus, the 479-residue chain is Sulfate adenylyltransferase subunit 1 (479 aa).

The 215-residue stretch at 25–239 (KSLLRFLTCG…EVLETVDIQR (215 aa)) folds into the tr-type G domain. The G1 stretch occupies residues 34-41 (GSVDDGKS). 34–41 (GSVDDGKS) is a GTP binding site. The G2 stretch occupies residues 92 to 96 (GITID). Residues 113 to 116 (DTPG) are G3. GTP is bound by residues 113–117 (DTPGH) and 168–171 (NKMD). The tract at residues 168–171 (NKMD) is G4. Residues 206–208 (SAL) form a G5 region.

Belongs to the TRAFAC class translation factor GTPase superfamily. Classic translation factor GTPase family. CysN/NodQ subfamily. In terms of assembly, heterodimer composed of CysD, the smaller subunit, and CysN.

The enzyme catalyses sulfate + ATP + H(+) = adenosine 5'-phosphosulfate + diphosphate. Its pathway is sulfur metabolism; hydrogen sulfide biosynthesis; sulfite from sulfate: step 1/3. In terms of biological role, with CysD forms the ATP sulfurylase (ATPS) that catalyzes the adenylation of sulfate producing adenosine 5'-phosphosulfate (APS) and diphosphate, the first enzymatic step in sulfur assimilation pathway. APS synthesis involves the formation of a high-energy phosphoric-sulfuric acid anhydride bond driven by GTP hydrolysis by CysN coupled to ATP hydrolysis by CysD. This Salmonella agona (strain SL483) protein is Sulfate adenylyltransferase subunit 1.